A 435-amino-acid polypeptide reads, in one-letter code: Ribosomal protein uS12 methylthiotransferase RimO (435 aa).

Residues 2-118 form the MTTase N-terminal domain; it reads KKFHIVKLGC…IVEKIENGEY (117 aa). 6 residues coordinate [4Fe-4S] cluster: Cys-11, Cys-47, Cys-81, Cys-150, Cys-154, and Cys-157. Residues 136–364 form the Radical SAM core domain; that stretch reads IPDSHYAYVK…MTVQSEISKN (229 aa). Positions 367–435 constitute a TRAM domain; sequence EKYIGETLEV…EYDLEGEIVE (69 aa).

The protein belongs to the methylthiotransferase family. RimO subfamily. [4Fe-4S] cluster is required as a cofactor.

The protein localises to the cytoplasm. The enzyme catalyses L-aspartate(89)-[ribosomal protein uS12]-hydrogen + (sulfur carrier)-SH + AH2 + 2 S-adenosyl-L-methionine = 3-methylsulfanyl-L-aspartate(89)-[ribosomal protein uS12]-hydrogen + (sulfur carrier)-H + 5'-deoxyadenosine + L-methionine + A + S-adenosyl-L-homocysteine + 2 H(+). Catalyzes the methylthiolation of an aspartic acid residue of ribosomal protein uS12. The protein is Ribosomal protein uS12 methylthiotransferase RimO of Petrotoga mobilis (strain DSM 10674 / SJ95).